The sequence spans 445 residues: Exodeoxyribonuclease 7 large subunit (445 aa).

Belongs to the XseA family. As to quaternary structure, heterooligomer composed of large and small subunits.

It localises to the cytoplasm. The enzyme catalyses Exonucleolytic cleavage in either 5'- to 3'- or 3'- to 5'-direction to yield nucleoside 5'-phosphates.. Its function is as follows. Bidirectionally degrades single-stranded DNA into large acid-insoluble oligonucleotides, which are then degraded further into small acid-soluble oligonucleotides. The chain is Exodeoxyribonuclease 7 large subunit from Xanthomonas euvesicatoria pv. vesicatoria (strain 85-10) (Xanthomonas campestris pv. vesicatoria).